Reading from the N-terminus, the 166-residue chain is MAEQKGMDPDTKYIKLQVVGGEVPGATLAQRVGPLGLSSKVVGEDIKKATADYKSLKVHVQLAIKDRKATVEVQPSVATLIIKSLKEPPRDRKKEKNILHNGSLRMTEVVDIARIARSSRSYSNSLSGTVKEVLGTCKSIGCKVDGKCPKEVTREIDAGEIKLPDQ.

Arg-67 is modified (N5-methylarginine).

Belongs to the universal ribosomal protein uL11 family.

This is Large ribosomal subunit protein uL11 (RPL12) from Encephalitozoon cuniculi (strain GB-M1) (Microsporidian parasite).